Reading from the N-terminus, the 261-residue chain is Carbonic anhydrase 1 (261 aa).

The segment at 1–31 (MASPDWGYDDKNGPEQWSKLYPIANGNNQSP) is disordered. Ala2 carries the post-translational modification N-acetylalanine. Positions 4–261 (PDWGYDDKNG…LKGRTVRASF (258 aa)) constitute an Alpha-carbonic anhydrase domain. His65 serves as the catalytic Proton donor/acceptor. Positions 65, 68, 95, 97, and 120 each coordinate Zn(2+). Residues Thr200 and 200-201 (TH) contribute to the substrate site. Zn(2+) is bound at residue His201. A disordered region spans residues 241 to 261 (PMQHNNRPTQPLKGRTVRASF).

The protein belongs to the alpha-carbonic anhydrase family. Zn(2+) serves as cofactor.

The protein localises to the cytoplasm. It catalyses the reaction hydrogencarbonate + H(+) = CO2 + H2O. The enzyme catalyses urea = cyanamide + H2O. With respect to regulation, activated by histamine, imidazole, L-adrenaline, L- and D-histidine, and L- and D-phenylalanine. Inhibited by coumarins, sulfonamide derivatives such as acetazolamide, benzenesulfonamide and derivatives (4-carboxyethylbenzene-sulfonamide, 4-carboxyethylbenzene-sulfonamide ethyl ester, 4-(acetyl-2-aminoethyl)benzene-sulfonamide, 4-aminoethylbenzene-sulfonamide), and 'prong inhibitors' BR15, BR17, BR22 and BR30. Activated by a short exposition to Foscarnet (phosphonoformate trisodium salt), but inhibited by a long one. Esterase activity weakly reduced by cyanamide. Its function is as follows. Catalyzes the reversible hydration of carbon dioxide. Can hydrate cyanamide to urea. The polypeptide is Carbonic anhydrase 1 (CA1) (Homo sapiens (Human)).